The sequence spans 78 residues: Structural DNA-binding protein p10 (78 aa).

Over residues 1 to 27 (MPTKAGTKSTANKKTTKGSSKSGSSRG) the composition is skewed to low complexity. The segment at 1 to 41 (MPTKAGTKSTANKKTTKGSSKSGSSRGHTGKTHASSSMHSG) is disordered.

The protein belongs to the asfivirus P10 family.

The protein resides in the virion. Functionally, may play a role in genome packaging through direct interaction with viral DNA. Binds to ssDNA and dsDNA with the same apparent affinity in vitro. The sequence is that of Structural DNA-binding protein p10 from African swine fever virus (strain Badajoz 1971 Vero-adapted) (Ba71V).